The chain runs to 74 residues: Conotoxin AbVII (74 aa).

Positions 1–17 (VLIIAVLFLTACQLTTA) are cleaved as a signal peptide. The propeptide occupies 18-40 (ETSSRGKQKHRALRSTDKNSRMT). A disordered region spans residues 19 to 41 (TSSRGKQKHRALRSTDKNSRMTK). 3 cysteine pairs are disulfide-bonded: Cys-43-Cys-57, Cys-50-Cys-61, and Cys-56-Cys-68.

It belongs to the conotoxin O1 superfamily. In terms of tissue distribution, expressed by the venom duct.

Its subcellular location is the secreted. This Conus abbreviatus (Abbreviated cone) protein is Conotoxin AbVII.